Consider the following 203-residue polypeptide: ATP-dependent Clp protease proteolytic subunit (203 aa).

The active-site Nucleophile is serine 98. Residue histidine 123 is part of the active site.

This sequence belongs to the peptidase S14 family. In terms of assembly, fourteen ClpP subunits assemble into 2 heptameric rings which stack back to back to give a disk-like structure with a central cavity, resembling the structure of eukaryotic proteasomes.

It localises to the cytoplasm. The enzyme catalyses Hydrolysis of proteins to small peptides in the presence of ATP and magnesium. alpha-casein is the usual test substrate. In the absence of ATP, only oligopeptides shorter than five residues are hydrolyzed (such as succinyl-Leu-Tyr-|-NHMec, and Leu-Tyr-Leu-|-Tyr-Trp, in which cleavage of the -Tyr-|-Leu- and -Tyr-|-Trp bonds also occurs).. Functionally, cleaves peptides in various proteins in a process that requires ATP hydrolysis. Has a chymotrypsin-like activity. Plays a major role in the degradation of misfolded proteins. In Desulfotalea psychrophila (strain LSv54 / DSM 12343), this protein is ATP-dependent Clp protease proteolytic subunit.